An 81-amino-acid polypeptide reads, in one-letter code: Small ribosomal subunit protein bS16 (81 aa).

Belongs to the bacterial ribosomal protein bS16 family.

The polypeptide is Small ribosomal subunit protein bS16 (Phytoplasma mali (strain AT)).